The sequence spans 306 residues: MGTDGMAGRAILIAGPTASGKSALALALARARGGVVINADSMQVYADLRVLTARPNPAEEAQAPHRLYGSVDGAVNFSVGHYLAAVGEVLREVWAAGGLPIVVGGTGLYFKALLEGLSEIPPVPEAVRTALRAEAEGRETAALHADLARRDPEGAARLGAHDRLRVLRALEVLAATGRPLSAFQGSRRPGPLAGMPCDKLFLVPDRALLRARIDARFLAMMEEGALDEVARLRARRLDPMLPVMRAHGVPGLIAFLDGALTREEAVARGQADTRAYAKRQVTWFRHQAGAGWRWLAPEAAMREAGG.

Position 15-22 (15-22 (GPTASGKS)) interacts with ATP. 17–22 (TASGKS) is a binding site for substrate. The interval 40–43 (DSMQ) is interaction with substrate tRNA.

It belongs to the IPP transferase family. Monomer. It depends on Mg(2+) as a cofactor.

It catalyses the reaction adenosine(37) in tRNA + dimethylallyl diphosphate = N(6)-dimethylallyladenosine(37) in tRNA + diphosphate. Functionally, catalyzes the transfer of a dimethylallyl group onto the adenine at position 37 in tRNAs that read codons beginning with uridine, leading to the formation of N6-(dimethylallyl)adenosine (i(6)A). The protein is tRNA dimethylallyltransferase of Methylobacterium sp. (strain 4-46).